Here is a 446-residue protein sequence, read N- to C-terminus: tRNA-2-methylthio-N(6)-dimethylallyladenosine synthase (446 aa).

The MTTase N-terminal domain maps to 3-120; sequence KKIYIKTFGC…LPEMLKQRRS (118 aa). Residues C12, C49, C83, C157, C161, and C164 each coordinate [4Fe-4S] cluster. Residues 143–375 enclose the Radical SAM core domain; sequence KVEGATAFVS…QAVIDQNTRR (233 aa). The region spanning 378-444 is the TRAM domain; it reads DEMVGTVQRI…AYTLRGEIIV (67 aa).

The protein belongs to the methylthiotransferase family. MiaB subfamily. Monomer. It depends on [4Fe-4S] cluster as a cofactor.

The protein localises to the cytoplasm. The catalysed reaction is N(6)-dimethylallyladenosine(37) in tRNA + (sulfur carrier)-SH + AH2 + 2 S-adenosyl-L-methionine = 2-methylsulfanyl-N(6)-dimethylallyladenosine(37) in tRNA + (sulfur carrier)-H + 5'-deoxyadenosine + L-methionine + A + S-adenosyl-L-homocysteine + 2 H(+). Its function is as follows. Catalyzes the methylthiolation of N6-(dimethylallyl)adenosine (i(6)A), leading to the formation of 2-methylthio-N6-(dimethylallyl)adenosine (ms(2)i(6)A) at position 37 in tRNAs that read codons beginning with uridine. The chain is tRNA-2-methylthio-N(6)-dimethylallyladenosine synthase from Janthinobacterium sp. (strain Marseille) (Minibacterium massiliensis).